Reading from the N-terminus, the 338-residue chain is Ketol-acid reductoisomerase (NADP(+)) (338 aa).

Positions 1-181 (MKVFYDKDCD…GGGKAGIIET (181 aa)) constitute a KARI N-terminal Rossmann domain. NADP(+) is bound by residues 24-27 (YGSQ), R47, and S52. H107 is an active-site residue. Residue G133 coordinates NADP(+). In terms of domain architecture, KARI C-terminal knotted spans 182 to 327 (NFREETETDL…GKLRAMMPWI (146 aa)). Residues D190, E194, E226, and E230 each contribute to the Mg(2+) site. S251 lines the substrate pocket.

Belongs to the ketol-acid reductoisomerase family. Mg(2+) is required as a cofactor.

The enzyme catalyses (2R)-2,3-dihydroxy-3-methylbutanoate + NADP(+) = (2S)-2-acetolactate + NADPH + H(+). It carries out the reaction (2R,3R)-2,3-dihydroxy-3-methylpentanoate + NADP(+) = (S)-2-ethyl-2-hydroxy-3-oxobutanoate + NADPH + H(+). Its pathway is amino-acid biosynthesis; L-isoleucine biosynthesis; L-isoleucine from 2-oxobutanoate: step 2/4. The protein operates within amino-acid biosynthesis; L-valine biosynthesis; L-valine from pyruvate: step 2/4. Its function is as follows. Involved in the biosynthesis of branched-chain amino acids (BCAA). Catalyzes an alkyl-migration followed by a ketol-acid reduction of (S)-2-acetolactate (S2AL) to yield (R)-2,3-dihydroxy-isovalerate. In the isomerase reaction, S2AL is rearranged via a Mg-dependent methyl migration to produce 3-hydroxy-3-methyl-2-ketobutyrate (HMKB). In the reductase reaction, this 2-ketoacid undergoes a metal-dependent reduction by NADPH to yield (R)-2,3-dihydroxy-isovalerate. In Polaromonas naphthalenivorans (strain CJ2), this protein is Ketol-acid reductoisomerase (NADP(+)).